A 97-amino-acid chain; its full sequence is Co-chaperonin GroES (97 aa).

This sequence belongs to the GroES chaperonin family. As to quaternary structure, heptamer of 7 subunits arranged in a ring. Interacts with the chaperonin GroEL.

Its subcellular location is the cytoplasm. Together with the chaperonin GroEL, plays an essential role in assisting protein folding. The GroEL-GroES system forms a nano-cage that allows encapsulation of the non-native substrate proteins and provides a physical environment optimized to promote and accelerate protein folding. GroES binds to the apical surface of the GroEL ring, thereby capping the opening of the GroEL channel. This is Co-chaperonin GroES from Oleispira antarctica.